The following is a 391-amino-acid chain: Somatostatin receptor type 1 (391 aa).

The span at 1–11 (MFPNGTASSPS) shows a compositional bias: low complexity. The tract at residues 1–49 (MFPNGTASSPSSPSPSPGSCGEGGGSRGPGAGAADGMEEPGRNASQNGT) is disordered. Residues 1 to 55 (MFPNGTASSPSSPSPSPGSCGEGGGSRGPGAGAADGMEEPGRNASQNGTLSEGQG) lie on the Extracellular side of the membrane. Asn4 carries an N-linked (GlcNAc...) asparagine glycan. The span at 20 to 33 (CGEGGGSRGPGAGA) shows a compositional bias: gly residues. Residues Asn43 and Asn47 are each glycosylated (N-linked (GlcNAc...) asparagine). Residues 56 to 83 (SAILISFIYSVVCLVGLCGNSMVIYVIL) form a helical membrane-spanning segment. The Cytoplasmic segment spans residues 84–93 (RYAKMKTATN). A helical transmembrane segment spans residues 94–119 (IYILNLAIADELLMLSVPFLVTSTLL). The Extracellular portion of the chain corresponds to 120-130 (RHWPFGALLCR). Cys129 and Cys207 form a disulfide bridge. A helical transmembrane segment spans residues 131–152 (LVLSVDAVNMFTSIYCLTVLSV). Topologically, residues 153–174 (DRYVAVVHPIKAARYRRPTVAK) are cytoplasmic. A helical membrane pass occupies residues 175–195 (VVNLGVWVLSLLVILPIVVFS). The Extracellular portion of the chain corresponds to 196-218 (RTAANSDGTVACNMLMPEPAQRW). The helical transmembrane segment at 219-243 (LVGFVLYTFLMGFLLPVGAICLCYV) threads the bilayer. At 244-269 (LIIAKMRMVALKAGWQQRKRSERKIT) the chain is on the cytoplasmic side. Residues 270 to 295 (LMVMMVVMVFVICWMPFYVVQLVNVF) traverse the membrane as a helical segment. Topologically, residues 296 to 302 (AEQDDAT) are extracellular. Residues 303-326 (VSQLSVILGYANSCANPILYGFLS) traverse the membrane as a helical segment. Residues 327 to 391 (DNFKRSFQRI…GTCTSRITTL (65 aa)) lie on the Cytoplasmic side of the membrane. The S-palmitoyl cysteine moiety is linked to residue Cys338.

This sequence belongs to the G-protein coupled receptor 1 family. As to quaternary structure, interacts with SKB1.

The protein localises to the cell membrane. Functionally, receptor for somatostatin with higher affinity for somatostatin-14 than -28. This receptor is coupled via pertussis toxin sensitive G proteins to inhibition of adenylyl cyclase. In addition it stimulates phosphotyrosine phosphatase and Na(+)/H(+) exchanger via pertussis toxin insensitive G proteins. The protein is Somatostatin receptor type 1 (SSTR1) of Canis lupus familiaris (Dog).